A 197-amino-acid chain; its full sequence is Ribonuclease HII (197 aa).

An RNase H type-2 domain is found at 11–197 (HLIAGVDEVG…FAPVKKILGL (187 aa)). Asp-17, Glu-18, and Asp-109 together coordinate a divalent metal cation.

Belongs to the RNase HII family. The cofactor is Mn(2+). Mg(2+) is required as a cofactor.

The protein resides in the cytoplasm. It carries out the reaction Endonucleolytic cleavage to 5'-phosphomonoester.. Its function is as follows. Endonuclease that specifically degrades the RNA of RNA-DNA hybrids. The protein is Ribonuclease HII of Actinobacillus pleuropneumoniae serotype 5b (strain L20).